Here is a 189-residue protein sequence, read N- to C-terminus: Putative manganese efflux pump MntP (189 aa).

The next 6 membrane-spanning stretches (helical) occupy residues 3–23, 41–61, 62–82, 104–124, 132–152, and 168–188; these read PVATLFLAFAMSTDAFAAAIG, LIFGVIEALTPLVGWFLGKAA, AQYVSAWDHWIAFSLLLVLGA, FWLLALTGFATSIDAMAVGAG, IYSTAAAIGLATMAMVTIGVM, and AGGIVLIGIGSTILAEHLNIF.

This sequence belongs to the MntP (TC 9.B.29) family.

It localises to the cell inner membrane. Probably functions as a manganese efflux pump. The sequence is that of Putative manganese efflux pump MntP from Paraburkholderia phytofirmans (strain DSM 17436 / LMG 22146 / PsJN) (Burkholderia phytofirmans).